The primary structure comprises 156 residues: MDITFTIFAQSLAFAALIWIVATKIWPPLIKVIEERQQKIAEGLAAADLGQKELAQAQEEIKKTLKNAREKANEIIEQAHARAHQIIEAAKAEAITETNRQQNLAQVEIEAAAKRAREELRKHVSILAVNGAEKLLKREIDVNTHKMLLDELAAEI.

A helical transmembrane segment spans residues 3-23; the sequence is ITFTIFAQSLAFAALIWIVAT.

Belongs to the ATPase B chain family. F-type ATPases have 2 components, F(1) - the catalytic core - and F(0) - the membrane proton channel. F(1) has five subunits: alpha(3), beta(3), gamma(1), delta(1), epsilon(1). F(0) has three main subunits: a(1), b(2) and c(10-14). The alpha and beta chains form an alternating ring which encloses part of the gamma chain. F(1) is attached to F(0) by a central stalk formed by the gamma and epsilon chains, while a peripheral stalk is formed by the delta and b chains.

It is found in the cell inner membrane. F(1)F(0) ATP synthase produces ATP from ADP in the presence of a proton or sodium gradient. F-type ATPases consist of two structural domains, F(1) containing the extramembraneous catalytic core and F(0) containing the membrane proton channel, linked together by a central stalk and a peripheral stalk. During catalysis, ATP synthesis in the catalytic domain of F(1) is coupled via a rotary mechanism of the central stalk subunits to proton translocation. Functionally, component of the F(0) channel, it forms part of the peripheral stalk, linking F(1) to F(0). The sequence is that of ATP synthase subunit b from Xylella fastidiosa (strain 9a5c).